Consider the following 364-residue polypeptide: MDFFYIGVMSGSSLDGIDIALLKQDDRSRLVATHYIPMPEDLHAELLGLCSSGADEFARAAIAEQKWCKLVAQGVQTLLKEQNKVVADIRAIGSHGQTIRHEPARGYSIQIGNPALLAELTEITVVSDFRRRDIAAGGQGAPLVPAFHEALFDDNKDHRAVLNIGGFSNLSLIESDRPVEGFDCGPGNVLLDAWIQSQRHESYDKDGAWAASGKVDPELLKKLLSDPFFLTKGPKSTGREVFNLGWVHHHLFQLPTLAPEDVQATLLELTALTITESLQTAQAVTKELLVCGGGAHNKALMKRLAELLPDTEVNSTEKFGVDPDWVEAMAFAWLAHCCLEGVPANRPTVTGAKGRRVLGAIYPA.

11-18 (GSSLDGID) contacts ATP.

The protein belongs to the anhydro-N-acetylmuramic acid kinase family.

The catalysed reaction is 1,6-anhydro-N-acetyl-beta-muramate + ATP + H2O = N-acetyl-D-muramate 6-phosphate + ADP + H(+). It participates in amino-sugar metabolism; 1,6-anhydro-N-acetylmuramate degradation. It functions in the pathway cell wall biogenesis; peptidoglycan recycling. Catalyzes the specific phosphorylation of 1,6-anhydro-N-acetylmuramic acid (anhMurNAc) with the simultaneous cleavage of the 1,6-anhydro ring, generating MurNAc-6-P. Is required for the utilization of anhMurNAc either imported from the medium or derived from its own cell wall murein, and thus plays a role in cell wall recycling. The chain is Anhydro-N-acetylmuramic acid kinase from Pseudomonas syringae pv. tomato (strain ATCC BAA-871 / DC3000).